The following is a 384-amino-acid chain: Cell division protein FtsZ (384 aa).

GTP is bound by residues 20 to 24 (GGGGN), 107 to 109 (GTG), glutamate 138, arginine 142, and asparagine 186.

It belongs to the FtsZ family. Homodimer. Polymerizes to form a dynamic ring structure in a strictly GTP-dependent manner. Interacts directly with several other division proteins.

The protein localises to the cytoplasm. Essential cell division protein that forms a contractile ring structure (Z ring) at the future cell division site. The regulation of the ring assembly controls the timing and the location of cell division. One of the functions of the FtsZ ring is to recruit other cell division proteins to the septum to produce a new cell wall between the dividing cells. Binds GTP and shows GTPase activity. The polypeptide is Cell division protein FtsZ (Wigglesworthia glossinidia brevipalpis).